Reading from the N-terminus, the 664-residue chain is Intraflagellar transport protein 70A1 (664 aa).

TPR repeat units follow at residues 11–44, 45–78, 153–186, 188–220, 393–423, 424–456, and 458–491; these read DGEF…SSRS, RAGL…HPEL, PDGL…SGYQ, DLSY…GIRQ, TKQV…EKYI, PVLM…CNDH, and VWKL…NYDN. Residues 507-534 are a coiled coil; the sequence is YIMTSQNEEAEELMRKIEKEEEQLSYGD. A TPR 8 repeat occupies 543-576; the sequence is CIVNLVIGTLYCAKGNYDFGISRVIKSLEPYHKK.

Belongs to the TTC30/dfy-1/fleer family. Interacts wit the IFT B complex component IFT52.

The protein localises to the cell projection. It is found in the cilium. In terms of biological role, required for polyglutamylation of axonemal tubulin. Plays a role in anterograde intraflagellar transport (IFT), the process by which cilia precursors are transported from the base of the cilium to the site of their incorporation at the tip. This chain is Intraflagellar transport protein 70A1 (Ift70a1), found in Mus musculus (Mouse).